The sequence spans 337 residues: Ketol-acid reductoisomerase (NADP(+)) (337 aa).

Positions 1-181 (MKIYYEHDAD…GAARAGVIAT (181 aa)) constitute a KARI N-terminal Rossmann domain. Residues 24–27 (FGSQ), R47, S50, S52, and 82–85 (DEKQ) contribute to the NADP(+) site. H107 is an active-site residue. G133 contributes to the NADP(+) binding site. The 147-residue stretch at 182 to 328 (TFKDETETDL…SRLRAMMPFL (147 aa)) folds into the KARI C-terminal knotted domain. Residues D190, E194, E226, and E230 each coordinate Mg(2+). S251 is a substrate binding site.

Belongs to the ketol-acid reductoisomerase family. Mg(2+) serves as cofactor.

It catalyses the reaction (2R)-2,3-dihydroxy-3-methylbutanoate + NADP(+) = (2S)-2-acetolactate + NADPH + H(+). The catalysed reaction is (2R,3R)-2,3-dihydroxy-3-methylpentanoate + NADP(+) = (S)-2-ethyl-2-hydroxy-3-oxobutanoate + NADPH + H(+). It functions in the pathway amino-acid biosynthesis; L-isoleucine biosynthesis; L-isoleucine from 2-oxobutanoate: step 2/4. The protein operates within amino-acid biosynthesis; L-valine biosynthesis; L-valine from pyruvate: step 2/4. Its function is as follows. Involved in the biosynthesis of branched-chain amino acids (BCAA). Catalyzes an alkyl-migration followed by a ketol-acid reduction of (S)-2-acetolactate (S2AL) to yield (R)-2,3-dihydroxy-isovalerate. In the isomerase reaction, S2AL is rearranged via a Mg-dependent methyl migration to produce 3-hydroxy-3-methyl-2-ketobutyrate (HMKB). In the reductase reaction, this 2-ketoacid undergoes a metal-dependent reduction by NADPH to yield (R)-2,3-dihydroxy-isovalerate. This is Ketol-acid reductoisomerase (NADP(+)) from Thermus thermophilus (strain ATCC BAA-163 / DSM 7039 / HB27).